A 440-amino-acid polypeptide reads, in one-letter code: ATP-dependent RNA helicase sub2 (440 aa).

Positions Met1–Gln16 are enriched in acidic residues. Residues Met1–Gly42 form a disordered region. Residues Thr17–Ala28 show a composition bias toward low complexity. The Q motif motif lies at Thr57–Gln85. The Helicase ATP-binding domain occupies Ile88–Val263. Ala101–Thr108 contributes to the ATP binding site. Residues Asp210–Asp213 carry the DEAD box motif. The 146-residue stretch at Lys291 to Ser436 folds into the Helicase C-terminal domain.

The protein belongs to the DEAD box helicase family. DECD subfamily.

It localises to the nucleus. It carries out the reaction ATP + H2O = ADP + phosphate + H(+). ATP-binding RNA helicase involved in transcription elongation and required for the export of mRNA out of the nucleus. SUB2 also plays a role in pre-mRNA splicing and spliceosome assembly. May be involved in rDNA and telomeric silencing, and maintenance of genome integrity. This chain is ATP-dependent RNA helicase sub2 (sub2), found in Aspergillus niger (strain ATCC MYA-4892 / CBS 513.88 / FGSC A1513).